Here is a 687-residue protein sequence, read N- to C-terminus: Mu-like prophage FluMu transposase A (687 aa).

Residues T8–Q74 enclose the HTH Mu-type domain. A DNA-binding region (H-T-H motif) is located at residues P398–L417.

In terms of biological role, this transposase is essential for integration, replication-transposition, and excision of Mu-like viral DNA. The polypeptide is Mu-like prophage FluMu transposase A (Haemophilus influenzae (strain ATCC 51907 / DSM 11121 / KW20 / Rd)).